The primary structure comprises 335 residues: Ubiquinol oxidase 1b, mitochondrial (335 aa).

A mitochondrion-targeting transit peptide spans methionine 1 to methionine 47. A helical transmembrane segment spans residues alanine 160–leucine 180. Residues glutamate 164, glutamate 203, and histidine 206 each coordinate Fe cation. A helical membrane pass occupies residues alanine 222 to serine 242. Positions 254, 305, and 308 each coordinate Fe cation.

The protein belongs to the alternative oxidase family. Fe cation serves as cofactor.

It is found in the mitochondrion inner membrane. It catalyses the reaction 2 a ubiquinol + O2 = 2 a ubiquinone + 2 H2O. Its function is as follows. Catalyzes the cyanide-resistant oxidation of ubiquinol and the reduction of molecular oxygen to water, but does not translocate protons and consequently is not linked to oxidative phosphorylation. May increase respiration when the cytochrome respiratory pathway is restricted, or in response to low temperatures. This is Ubiquinol oxidase 1b, mitochondrial from Oryza sativa subsp. japonica (Rice).